Consider the following 156-residue polypeptide: Hexachlorocyclohexane dehydrochlorinase 2 (156 aa).

Aspartate 25 is an active-site residue. Residue histidine 73 is the Proton acceptor of the active site.

The protein belongs to the HCH dehydrochlorinase family. Homotrimer.

The protein localises to the periplasm. It carries out the reaction gamma-hexachlorocyclohexane = (3R,4S,5S,6R)-pentachlorocyclohexene + chloride + H(+). The enzyme catalyses (3R,4S,5S,6R)-pentachlorocyclohexene = (3R,6R)-1,3,4,6-tetrachlorocyclohexa-1,4-diene + chloride + H(+). Its pathway is xenobiotic degradation; hexachlorocyclohexane degradation. In terms of biological role, catalyzes the conversion of the important environmental pollutant gamma-hexachlorocyclohexane (gamma-HCH or lindane) to 1,3,4,6-tetrachloro-1,4-cyclohexadiene (1,4-TCDN) via gamma-pentachlorocyclohexene (gamma-PCCH). Proceeds by two successive 1,2-anti conformationally dependent dehydrochlorinations. Also shows activity with alpha- and delta-HCH, giving alpha- and delta-PCCH respectively, but not with the beta isomer. The polypeptide is Hexachlorocyclohexane dehydrochlorinase 2 (Sphingobium indicum (strain DSM 16412 / CCM 7286 / MTCC 6364 / B90A)).